The following is a 106-amino-acid chain: Iron-sulfur cluster assembly protein CyaY (106 aa).

The protein belongs to the frataxin family.

Its function is as follows. Involved in iron-sulfur (Fe-S) cluster assembly. May act as a regulator of Fe-S biogenesis. This chain is Iron-sulfur cluster assembly protein CyaY, found in Salmonella typhimurium (strain LT2 / SGSC1412 / ATCC 700720).